A 79-amino-acid polypeptide reads, in one-letter code: Large ribosomal subunit protein uL22 (79 aa).

The protein belongs to the universal ribosomal protein uL22 family. In terms of assembly, part of the 50S ribosomal subunit.

Functionally, this protein binds specifically to 23S rRNA; its binding is stimulated by other ribosomal proteins, e.g. L4, L17, and L20. It is important during the early stages of 50S assembly. It makes multiple contacts with different domains of the 23S rRNA in the assembled 50S subunit and ribosome. The globular domain of the protein is located near the polypeptide exit tunnel on the outside of the subunit, while an extended beta-hairpin is found that lines the wall of the exit tunnel in the center of the 70S ribosome. The chain is Large ribosomal subunit protein uL22 (rplV) from Clover proliferation phytoplasma.